We begin with the raw amino-acid sequence, 415 residues long: Phakinin (415 aa).

Positions 1–26 (MSTRRVVVDAPAGASSSMPLQRHKAS) are disordered. Serine 2 carries the post-translational modification N-acetylserine. The segment at 2–114 (STRRVVVDAP…LGAVEDLGGC (113 aa)) is head. 3 positions are modified to phosphoserine: serine 26, serine 32, and serine 35. Threonine 53 carries the post-translational modification Phosphothreonine. Phosphoserine is present on residues serine 90 and serine 100. The 312-residue stretch at 104 to 415 (DLGAVEDLGG…HALLDREESS (312 aa)) folds into the IF rod domain. Coiled-coil stretches lie at residues 115–144 (LVEY…ESKA), 199–248 (RKAA…VKML), and 295–395 (QAKQ…LSHK). The interval 396-415 (CQLQRDVASYHALLDREESS) is tail.

It belongs to the intermediate filament family. In terms of assembly, part of a complex required for lens intermediate filament formation composed of BFSP1, BFSP2 and CRYAA. Found in a complex composed of PPL (via C-terminal linker domain), BFSP1 and BFSP2 in the retinal lens. Within the complex interacts with PPL (via C-terminal linker domain) and with BFSP1. Identified in a complex that contains VIM, EZR, AHNAK, BFSP1, BFSP2, ANK2, PLEC, PRX and spectrin. Interacts with LGSN. Interacts with VIM. In terms of tissue distribution, abundantly expressed in both the inner and outer cortex of the retina, expressed at a lower level in the nucleus of the retina (at protein level). Detected in eye lens fiber cells (at protein level).

It localises to the cell membrane. It is found in the cytoplasm. Its subcellular location is the cytoskeleton. The protein resides in the cell cortex. In terms of biological role, required for the correct formation of lens intermediate filaments as part of a complex composed of BFSP1, BFSP2 and CRYAA. Plays a role in maintenance of retinal lens optical clarity. The chain is Phakinin (BFSP2) from Bos taurus (Bovine).